Consider the following 464-residue polypeptide: Cell division protein FtsA (464 aa).

A disordered region spans residues 392-464 (EVIETDKDTE…FKKLMKSLFE (73 aa)). Residues 416-455 (KKENDEVAPEAPREESYEDRENHLEDEQQTEGKAKEESKF) are compositionally biased toward basic and acidic residues.

It belongs to the FtsA/MreB family. As to quaternary structure, self-interacts. Interacts with FtsZ.

The protein localises to the cell membrane. Functionally, cell division protein that is involved in the assembly of the Z ring. May serve as a membrane anchor for the Z ring. The protein is Cell division protein FtsA of Staphylococcus epidermidis (strain ATCC 12228 / FDA PCI 1200).